The sequence spans 257 residues: UPF0246 protein A1S_2267 (257 aa).

This sequence belongs to the UPF0246 family.

This Acinetobacter baumannii (strain ATCC 17978 / DSM 105126 / CIP 53.77 / LMG 1025 / NCDC KC755 / 5377) protein is UPF0246 protein A1S_2267.